Here is a 692-residue protein sequence, read N- to C-terminus: Elongation factor G (692 aa).

One can recognise a tr-type G domain in the interval Glu8 to Leu282. GTP-binding positions include Ala17–Thr24, Asp81–His85, and Asn135–Asp138.

This sequence belongs to the TRAFAC class translation factor GTPase superfamily. Classic translation factor GTPase family. EF-G/EF-2 subfamily.

Its subcellular location is the cytoplasm. Its function is as follows. Catalyzes the GTP-dependent ribosomal translocation step during translation elongation. During this step, the ribosome changes from the pre-translocational (PRE) to the post-translocational (POST) state as the newly formed A-site-bound peptidyl-tRNA and P-site-bound deacylated tRNA move to the P and E sites, respectively. Catalyzes the coordinated movement of the two tRNA molecules, the mRNA and conformational changes in the ribosome. The sequence is that of Elongation factor G from Bacillus cereus (strain ATCC 10987 / NRS 248).